The chain runs to 479 residues: FAD-dependent monooxygenase sdcF (479 aa).

In terms of domain architecture, FAD-binding PCMH-type spans 40–213 (AQLPPSCFVL…TLFDMEAFST (174 aa)). A Pros-8alpha-FAD histidine modification is found at His-79.

This sequence belongs to the oxygen-dependent FAD-linked oxidoreductase family. The cofactor is FAD.

It participates in secondary metabolite biosynthesis. In terms of biological role, FAD-dependent monooxygenase; part of the gene cluster that mediates the biosynthesis of the polyenes aspernidgulenes. The carbon backbone of aspernidgulenes is synthesized by the HR-PKS sdgA, which accepts acetyl-CoA as the starter unit and performs malonyl-CoA extensions as well as regioselective methylation and reduction. The resulting nonaketide offloads the HR-PKS by intramolecular lactonization to yield the 5,6-dihydro-alpha-pyrone-containing hexaenoic acids preaspernidgulene A1 and A2. The FAD-dependent monooxygenase sdgC then installs the first epoxide on the penultimate double bond. Subsequently, the FAD-dependent monooxygenase sdgF presumably generates a ketone intermediate through Meinwald rearrangement involving a hydride shift. Next, sdgC introduces another epoxide on the last olefin of the ketone intermediate after E/Z isomerization. The epoxide hydrolase sdgD then catalyzes stereospecific cyclization of the 5,6-dihydro-alpha-pyrone and opening of the epoxide ring to form an oxygenated trimethylcyclopentanone and an oxabicyclo[2.2.1]heptane unit. Finally, the bicyclic unit undergoes hydrolytic cleavage, either spontaneously or catalyzed by sdgD, to assemble the dimethyl-gamma-lactone moiety in aspernidgulene A1. This chain is FAD-dependent monooxygenase sdcF, found in Emericella nidulans (strain FGSC A4 / ATCC 38163 / CBS 112.46 / NRRL 194 / M139) (Aspergillus nidulans).